The following is a 201-amino-acid chain: Large ribosomal subunit protein uL18 (201 aa).

It belongs to the universal ribosomal protein uL18 family. In terms of assembly, part of the 50S ribosomal subunit. Contacts the 5S and 23S rRNAs.

This is one of the proteins that bind and probably mediate the attachment of the 5S RNA into the large ribosomal subunit, where it forms part of the central protuberance. The polypeptide is Large ribosomal subunit protein uL18 (Thermococcus gammatolerans (strain DSM 15229 / JCM 11827 / EJ3)).